A 650-amino-acid chain; its full sequence is Peroxisomal biogenesis factor 8 (650 aa).

Residues 648 to 650 (AKL) carry the Microbody targeting signal motif.

Its subcellular location is the peroxisome matrix. In terms of biological role, essential for peroxisome biogenesis. May play a role in triggering the protein import competence of individual peroxisomes. It may interact with PEX10. The protein is Peroxisomal biogenesis factor 8 (PEX8) of Pichia angusta (Yeast).